The chain runs to 276 residues: Aldo-keto reductase Mkms_1985 (276 aa).

Y50 (proton donor) is an active-site residue. The NADPH site is built by L190, I228, K230, S231, V232, R236, S239, and N240. The interval 257–276 (SSLEDGSRLGPDPKTFNFTG) is disordered.

The protein belongs to the aldo/keto reductase family.

This Mycobacterium sp. (strain KMS) protein is Aldo-keto reductase Mkms_1985.